A 449-amino-acid chain; its full sequence is 3-phosphoshikimate 1-carboxyvinyltransferase (449 aa).

3-phosphoshikimate contacts are provided by Lys-28, Ser-29, and Arg-33. Lys-28 serves as a coordination point for phosphoenolpyruvate. Phosphoenolpyruvate contacts are provided by Gly-105 and Arg-133. Residues Ser-179, Gln-181, Asp-332, and Lys-359 each coordinate 3-phosphoshikimate. Phosphoenolpyruvate is bound at residue Gln-181. Asp-332 serves as the catalytic Proton acceptor. Phosphoenolpyruvate contacts are provided by Arg-363 and Arg-406.

The protein belongs to the EPSP synthase family. Monomer.

Its subcellular location is the cytoplasm. It catalyses the reaction 3-phosphoshikimate + phosphoenolpyruvate = 5-O-(1-carboxyvinyl)-3-phosphoshikimate + phosphate. Its pathway is metabolic intermediate biosynthesis; chorismate biosynthesis; chorismate from D-erythrose 4-phosphate and phosphoenolpyruvate: step 6/7. In terms of biological role, catalyzes the transfer of the enolpyruvyl moiety of phosphoenolpyruvate (PEP) to the 5-hydroxyl of shikimate-3-phosphate (S3P) to produce enolpyruvyl shikimate-3-phosphate and inorganic phosphate. The sequence is that of 3-phosphoshikimate 1-carboxyvinyltransferase from Nitrobacter hamburgensis (strain DSM 10229 / NCIMB 13809 / X14).